Here is a 252-residue protein sequence, read N- to C-terminus: 5-oxoprolinase subunit A (252 aa).

This sequence belongs to the LamB/PxpA family. In terms of assembly, forms a complex composed of PxpA, PxpB and PxpC.

The enzyme catalyses 5-oxo-L-proline + ATP + 2 H2O = L-glutamate + ADP + phosphate + H(+). Functionally, catalyzes the cleavage of 5-oxoproline to form L-glutamate coupled to the hydrolysis of ATP to ADP and inorganic phosphate. The chain is 5-oxoprolinase subunit A from Mycolicibacterium gilvum (strain PYR-GCK) (Mycobacterium gilvum (strain PYR-GCK)).